A 1755-amino-acid chain; its full sequence is Transposon Ty1-NL1 Gag-Pol polyprotein (1755 aa).

4 stretches are compositionally biased toward polar residues: residues 1–23 (MESQQLSQHSPISHGSACASVTS), 48–60 (TKANSQQTTTPAS), 71–86 (SPQTAQSHSPQNGPYQ), and 131–152 (PQYPSSVGTPLSTPSPESGNTF). Disordered regions lie at residues 1 to 86 (MESQ…GPYQ), 131 to 171 (PQYP…YVRP), and 350 to 420 (QQES…IRGS). Residues 153–165 (TDSSSADSDMTST) are compositionally biased toward low complexity. The interval 299–401 (NNGIPINNKV…NSQSRTARAH (103 aa)) is RNA-binding. Residues 363-372 (NPSDEKKDSR) show a composition bias toward basic and acidic residues. The segment covering 373 to 412 (TYTNTTKPKSITRNSQKPNNSQSRTARAHNVSTSNNSSGP) has biased composition (polar residues). The For protease activity; shared with dimeric partner role is filled by Asp461. Positions 583–640 (NVHTSESTRKYPYPFIHRMLAHANAQTIRYSLKNNTITYFNESDVDWSSAIDYQCPDC) are integrase-type zinc finger-like. An Integrase catalytic domain is found at 660–835 (NSYEPFQYLH…AGLDISTLLP (176 aa)). 2 residues coordinate Mg(2+): Asp671 and Asp736. Disordered regions lie at residues 956–1120 (SKAV…TCPK) and 1146–1172 (DSFKELPPINSRQTNSSLGGIGDSNAY). A compositionally biased stretch (low complexity) spans 960 to 969 (SPTDSTPPST). Polar residues predominate over residues 1005–1015 (STPQISDIEST). A compositionally biased stretch (basic and acidic residues) spans 1038–1053 (ESSHTSKSKDFRHSDS). Composition is skewed to polar residues over residues 1054-1082 (YSDNETNHTNVPISSTGGTNNKTVPQTSE) and 1095-1106 (SIDTSSSESNSL). A Bipartite nuclear localization signal motif is present at residues 1178–1212 (KKRSLEDNETEIKVSRDTWNTKNMRSLEPPRSKKR). Residues 1338–1476 (NNYYITQLDI…DILGLEIKYQ (139 aa)) enclose the Reverse transcriptase Ty1/copia-type domain. 6 residues coordinate Mg(2+): Asp1346, Asp1427, Asp1428, Asp1610, Glu1652, and Asp1685. Residues 1610-1752 (DASYGNQPYY…IKTFKLLTNK (143 aa)) form the RNase H Ty1/copia-type domain.

As to quaternary structure, the capsid protein forms a homotrimer, from which the VLPs are assembled. The protease is a homodimer, whose active site consists of two apposed aspartic acid residues. Initially, virus-like particles (VLPs) are composed of the structural unprocessed proteins Gag and Gag-Pol, and also contain the host initiator methionine tRNA (tRNA(i)-Met) which serves as a primer for minus-strand DNA synthesis, and a dimer of genomic Ty RNA. Processing of the polyproteins occurs within the particle and proceeds by an ordered pathway, called maturation. First, the protease (PR) is released by autocatalytic cleavage of the Gag-Pol polyprotein yielding capsid protein p45 and a Pol-p154 precursor protein. This cleavage is a prerequisite for subsequent processing of Pol-p154 at the remaining sites to release the mature structural and catalytic proteins. Maturation takes place prior to the RT reaction and is required to produce transposition-competent VLPs.

The protein resides in the cytoplasm. The protein localises to the nucleus. It catalyses the reaction DNA(n) + a 2'-deoxyribonucleoside 5'-triphosphate = DNA(n+1) + diphosphate. The catalysed reaction is Endonucleolytic cleavage to 5'-phosphomonoester.. Functionally, capsid protein (CA) is the structural component of the virus-like particle (VLP), forming the shell that encapsulates the retrotransposons dimeric RNA genome. The particles are assembled from trimer-clustered units and there are holes in the capsid shells that allow for the diffusion of macromolecules. CA also has nucleocapsid-like chaperone activity, promoting primer tRNA(i)-Met annealing to the multipartite primer-binding site (PBS), dimerization of Ty1 RNA and initiation of reverse transcription. The aspartyl protease (PR) mediates the proteolytic cleavages of the Gag and Gag-Pol polyproteins after assembly of the VLP. In terms of biological role, reverse transcriptase/ribonuclease H (RT) is a multifunctional enzyme that catalyzes the conversion of the retro-elements RNA genome into dsDNA within the VLP. The enzyme displays a DNA polymerase activity that can copy either DNA or RNA templates, and a ribonuclease H (RNase H) activity that cleaves the RNA strand of RNA-DNA heteroduplexes during plus-strand synthesis and hydrolyzes RNA primers. The conversion leads to a linear dsDNA copy of the retrotransposon that includes long terminal repeats (LTRs) at both ends. Its function is as follows. Integrase (IN) targets the VLP to the nucleus, where a subparticle preintegration complex (PIC) containing at least integrase and the newly synthesized dsDNA copy of the retrotransposon must transit the nuclear membrane. Once in the nucleus, integrase performs the integration of the dsDNA into the host genome. This is Transposon Ty1-NL1 Gag-Pol polyprotein (TY1B-NL1) from Saccharomyces cerevisiae (strain ATCC 204508 / S288c) (Baker's yeast).